Reading from the N-terminus, the 395-residue chain is Elongation factor Tu (395 aa).

The 195-residue stretch at 10 to 204 folds into the tr-type G domain; it reads KPHVNIGTIG…TVDSYIPEPA (195 aa). Positions 19 to 26 are G1; sequence GHVDHGKT. 19–26 serves as a coordination point for GTP; it reads GHVDHGKT. Mg(2+) is bound at residue Thr-26. The tract at residues 60–64 is G2; sequence GITIN. The segment at 81-84 is G3; it reads DAPG. Residues 81–85 and 136–139 each bind GTP; these read DAPGH and NKTD. The G4 stretch occupies residues 136–139; that stretch reads NKTD. Residues 174-176 form a G5 region; sequence SAL.

This sequence belongs to the TRAFAC class translation factor GTPase superfamily. Classic translation factor GTPase family. EF-Tu/EF-1A subfamily. Monomer.

It is found in the cytoplasm. It catalyses the reaction GTP + H2O = GDP + phosphate + H(+). In terms of biological role, GTP hydrolase that promotes the GTP-dependent binding of aminoacyl-tRNA to the A-site of ribosomes during protein biosynthesis. This chain is Elongation factor Tu, found in Leuconostoc mesenteroides subsp. mesenteroides (strain ATCC 8293 / DSM 20343 / BCRC 11652 / CCM 1803 / JCM 6124 / NCDO 523 / NBRC 100496 / NCIMB 8023 / NCTC 12954 / NRRL B-1118 / 37Y).